The sequence spans 193 residues: Ribosomal RNA small subunit methyltransferase G (193 aa).

Residues glycine 62, phenylalanine 67, 111 to 112 (IE), and arginine 125 contribute to the S-adenosyl-L-methionine site.

It belongs to the methyltransferase superfamily. RNA methyltransferase RsmG family.

It localises to the cytoplasm. It carries out the reaction guanosine(527) in 16S rRNA + S-adenosyl-L-methionine = N(7)-methylguanosine(527) in 16S rRNA + S-adenosyl-L-homocysteine. Functionally, specifically methylates the N7 position of guanine in position 527 of 16S rRNA. This chain is Ribosomal RNA small subunit methyltransferase G, found in Gluconobacter oxydans (strain 621H) (Gluconobacter suboxydans).